The chain runs to 401 residues: G2/mitotic-specific cyclin-B1 (401 aa).

This sequence belongs to the cyclin family. Cyclin AB subfamily. As to quaternary structure, interacts with the CDK1 protein kinase to form a serine/threonine kinase holoenzyme complex also known as maturation promoting factor (MPF). The cyclin subunit imparts substrate specificity to the complex.

Essential for the control of the cell cycle at the G2/M (mitosis) transition. The protein is G2/mitotic-specific cyclin-B1 (ccnb1) of Oryzias luzonensis (Luzon ricefish).